The chain runs to 1209 residues: Pre-mRNA-splicing factor rse1 (1209 aa).

It belongs to the RSE1 family. As to quaternary structure, associated with the spliceosome.

It is found in the nucleus. In terms of biological role, involved in pre-mRNA splicing and cell cycle control. This is Pre-mRNA-splicing factor rse1 (msp-5) from Neurospora crassa (strain ATCC 24698 / 74-OR23-1A / CBS 708.71 / DSM 1257 / FGSC 987).